The following is a 440-amino-acid chain: MMKKNRNKKAMNKQEALFIPHYYRLGHLKNILDGGEYAPYVSPPILESNFIQVNRRGESIYLHNRANWVTVGICSSNPIFKTPNMMLLAHLTPEARKEPEPLFKTLLKSSSSGTLVLTRFIPLQFVTLSVHSAKNMRLKVKLINGRSYYLQLCAPVYKQDIIFSQWVDLIPLLNQEKIKNTKVSEVSSLSELTNSTDIAGSMDITDITAFRELRPRHPKTHRYPCNIMESADFSEYTDVTDVTDVTDVTDMLDNGITDVQDIKIVTEVTEVTEVTEVTEVSEVSDVKMATNISGVKIVFENDDIIKTKQEEKEYTLKHRSLQDTKTKSDYQDSPNPVTMSNIALALQDEGCFQTTQTPVKSKEDIYKEICDETSEENMIRLQNIHLKATESRSTRTDSDISDGELKLGRYLHKQCSSREQSFIHSLGSLPRGFVFLHLLL.

It belongs to the GARIN family. Interacts with CALM1. Expressed in testis (at protein level).

It is found in the cell projection. Its subcellular location is the cilium. The protein resides in the flagellum. Functionally, seems to play a role in sperm motility. This Mus musculus (Mouse) protein is Golgi-associated RAB2 interactor protein 2.